A 279-amino-acid polypeptide reads, in one-letter code: Small ribosomal subunit protein uS2 (279 aa).

Residues 232–260 (KVDMEAAGENAPKGAGKKKNTKARMDKAE) are disordered.

Belongs to the universal ribosomal protein uS2 family.

The chain is Small ribosomal subunit protein uS2 from Phocaeicola vulgatus (strain ATCC 8482 / DSM 1447 / JCM 5826 / CCUG 4940 / NBRC 14291 / NCTC 11154) (Bacteroides vulgatus).